A 579-amino-acid chain; its full sequence is Threonylcarbamoyladenosine tRNA methylthiotransferase (579 aa).

Residue Ser53 is modified to Phosphoserine. The MTTase N-terminal domain occupies 64–172 (QKIWIRTWGC…VVEVVEETIK (109 aa)). [4Fe-4S] cluster contacts are provided by Cys73 and Cys109. At Ser122 the chain carries Phosphoserine. Cys138, Cys214, Cys218, and Cys221 together coordinate [4Fe-4S] cluster. The 232-residue stretch at 200 to 431 (RKNPLIEIIS…RVFHSYSPYD (232 aa)) folds into the Radical SAM core domain. In terms of domain architecture, TRAM spans 431-493 (DHKIGERQQV…KHFMKGQPVS (63 aa)). Thr499 bears the Phosphothreonine mark. Residues 556–578 (CALRMSVGLALLGLLFAFFVKVY) form a helical membrane-spanning segment.

The protein belongs to the methylthiotransferase family. CDKAL1 subfamily. The cofactor is [4Fe-4S] cluster. Expressed in pancreatic islets.

It localises to the endoplasmic reticulum membrane. The catalysed reaction is N(6)-L-threonylcarbamoyladenosine(37) in tRNA + (sulfur carrier)-SH + AH2 + 2 S-adenosyl-L-methionine = 2-methylsulfanyl-N(6)-L-threonylcarbamoyladenosine(37) in tRNA + (sulfur carrier)-H + 5'-deoxyadenosine + L-methionine + A + S-adenosyl-L-homocysteine + 2 H(+). In terms of biological role, catalyzes the methylthiolation of N6-threonylcarbamoyladenosine (t(6)A), leading to the formation of 2-methylthio-N6-threonylcarbamoyladenosine (ms(2)t(6)A) at position 37 in tRNAs that read codons beginning with adenine. The chain is Threonylcarbamoyladenosine tRNA methylthiotransferase (CDKAL1) from Homo sapiens (Human).